A 319-amino-acid chain; its full sequence is Ribonuclease Z (319 aa).

The Zn(2+) site is built by His62, His64, Asp66, His67, His145, Asp216, and His274. Asp66 (proton acceptor) is an active-site residue.

The protein belongs to the RNase Z family. Homodimer. The cofactor is Zn(2+).

The enzyme catalyses Endonucleolytic cleavage of RNA, removing extra 3' nucleotides from tRNA precursor, generating 3' termini of tRNAs. A 3'-hydroxy group is left at the tRNA terminus and a 5'-phosphoryl group is left at the trailer molecule.. Functionally, zinc phosphodiesterase, which displays some tRNA 3'-processing endonuclease activity. Probably involved in tRNA maturation, by removing a 3'-trailer from precursor tRNA. This is Ribonuclease Z from Synechococcus sp. (strain CC9605).